We begin with the raw amino-acid sequence, 235 residues long: MRFDPPLEEGRLLRRYKRFLADIETASGEPMTIHCANTGSMLNCMSEGCRVWFSRSNDPKRKLPGSWEISETPQGRLACINTARANALVEEALRAGLIAELAGFTALKREVPYGVENSRADFRLDYPSGPVFVEVKSVTLGFDDSDVAAFPDAVTLRGARHLRELAALSRLGVRTVLLYCVNLSGIVAVRAAEDIDPAYAAGLREARAAGVEVLAYGAELSPEGISLVRRLDVLT.

It belongs to the SfsA family.

This is Sugar fermentation stimulation protein homolog from Ectopseudomonas mendocina (strain ymp) (Pseudomonas mendocina).